We begin with the raw amino-acid sequence, 123 residues long: Class I hydrophobin pri2 (123 aa).

Positions 1 to 18 are cleaved as a signal peptide; sequence MVAIKSLAILALPVMAMA. Disulfide bonds link C31–C102, C38–C96, C39–C84, and C103–C116. 2 N-linked (GlcNAc...) asparagine glycosylation sites follow: N33 and N40.

Belongs to the fungal hydrophobin family. In terms of assembly, self-assembles to form functional amyloid fibrils called rodlets. Self-assembly into fibrillar rodlets occurs spontaneously at hydrophobic:hydrophilic interfaces and the rodlets further associate laterally to form amphipathic monolayers.

It localises to the secreted. Its subcellular location is the cell wall. Aerial growth, conidiation, and dispersal of filamentous fungi in the environment rely upon a capability of their secreting small amphipathic proteins called hydrophobins (HPBs) with low sequence identity. Class I can self-assemble into an outermost layer of rodlet bundles on aerial cell surfaces, conferring cellular hydrophobicity that supports fungal growth, development and dispersal; whereas Class II form highly ordered films at water-air interfaces through intermolecular interactions but contribute nothing to the rodlet structure. In Cyclocybe aegerita (Black poplar mushroom), this protein is Class I hydrophobin pri2.